A 156-amino-acid polypeptide reads, in one-letter code: Arginine repressor (156 aa).

The protein belongs to the ArgR family.

It is found in the cytoplasm. It functions in the pathway amino-acid biosynthesis; L-arginine biosynthesis [regulation]. Regulates arginine biosynthesis genes. The sequence is that of Arginine repressor from Shewanella woodyi (strain ATCC 51908 / MS32).